The following is a 349-amino-acid chain: S-adenosylmethionine:tRNA ribosyltransferase-isomerase (349 aa).

This sequence belongs to the QueA family. As to quaternary structure, monomer.

It is found in the cytoplasm. It carries out the reaction 7-aminomethyl-7-carbaguanosine(34) in tRNA + S-adenosyl-L-methionine = epoxyqueuosine(34) in tRNA + adenine + L-methionine + 2 H(+). It participates in tRNA modification; tRNA-queuosine biosynthesis. Transfers and isomerizes the ribose moiety from AdoMet to the 7-aminomethyl group of 7-deazaguanine (preQ1-tRNA) to give epoxyqueuosine (oQ-tRNA). This Parabacteroides distasonis (strain ATCC 8503 / DSM 20701 / CIP 104284 / JCM 5825 / NCTC 11152) protein is S-adenosylmethionine:tRNA ribosyltransferase-isomerase.